A 516-amino-acid chain; its full sequence is Flagellar radial spoke protein 3 (516 aa).

Composition is skewed to polar residues over residues 1–11 (MVQAKAQQQLY) and 62–74 (ATQT…SPAS). Disordered stretches follow at residues 1 to 32 (MVQA…EDET), 60 to 90 (ADAT…TPEA), 388 to 412 (NAKW…AAEE), and 424 to 447 (AAAE…DGVE). The span at 391–412 (WEADKAEAAEKARAEAEAAAEE) shows a compositional bias: basic and acidic residues.

This sequence belongs to the flagellar radial spoke RSP3 family. In terms of assembly, interacts with FAP91. Protein 3 is one of the 5 radial spoke proteins that are phosphorylated. In terms of processing, protein 3a might only differ from protein 3 in being unphosphorylated.

It is found in the cytoplasm. Its subcellular location is the cytoskeleton. It localises to the flagellum axoneme. In terms of biological role, protein 3 may attach the radial spoke to the outer doublet microtubule or is required to form a stable spoke structure. Flagellar radial spokes contribute to the regulation of dynein arm activity and thus the pattern of flagellar bending. They consist of a thin stalk, which is attached to the a subfiber of the outer doublet microtubule, and a bulbous head, which is attached to the stalk and appears to interact with the projections from the central pair of microtubules. This Chlamydomonas reinhardtii (Chlamydomonas smithii) protein is Flagellar radial spoke protein 3.